The primary structure comprises 481 residues: Squalene epoxidase erg1 (481 aa).

Residues 28-48 (HADVVIIGAGVLGCALAVALG) traverse the membrane as a helical segment. FAD-binding positions include 38-39 (VL), 58-59 (EA), Arg66, and Arg138. Asn146 carries N-linked (GlcNAc...) asparagine glycosylation. Residues Asp319 and Met332 each contribute to the FAD site. 2 helical membrane passes run 425–445 (KPSVLFVHFFSVALLSLWVLL) and 452–472 (LFPVALFKCIMTFWTACVVIF).

The protein belongs to the squalene monooxygenase family. FAD serves as cofactor.

It localises to the endoplasmic reticulum membrane. The protein localises to the microsome membrane. It catalyses the reaction squalene + reduced [NADPH--hemoprotein reductase] + O2 = (S)-2,3-epoxysqualene + oxidized [NADPH--hemoprotein reductase] + H2O + H(+). It participates in steroid metabolism; ergosterol biosynthesis. In terms of biological role, squalene epoxidase; part of the third module of ergosterol biosynthesis pathway that includes the late steps of the pathway. Erg1 catalyzes the epoxidation of squalene into 2,3-epoxysqualene. The third module or late pathway involves the ergosterol synthesis itself through consecutive reactions that mainly occur in the endoplasmic reticulum (ER) membrane. Firstly, the squalene synthase erg9 catalyzes the condensation of 2 farnesyl pyrophosphate moieties to form squalene, which is the precursor of all steroids. Squalene synthase is crucial for balancing the incorporation of farnesyl diphosphate (FPP) into sterol and nonsterol isoprene synthesis. Secondly, squalene is converted into lanosterol by the consecutive action of the squalene epoxidase erg1 and the lanosterol synthase erg7. Then, the delta(24)-sterol C-methyltransferase erg6 methylates lanosterol at C-24 to produce eburicol. Eburicol is the substrate of the sterol 14-alpha demethylase encoded by cyp51A and cyp51B, to yield 4,4,24-trimethyl ergosta-8,14,24(28)-trienol. The C-14 reductase erg24 then reduces the C14=C15 double bond which leads to 4,4-dimethylfecosterol. A sequence of further demethylations at C-4, involving the C-4 demethylation complex containing the C-4 methylsterol oxidases erg25A or erg25B, the sterol-4-alpha-carboxylate 3-dehydrogenase erg26 and the 3-keto-steroid reductase erg27, leads to the production of fecosterol via 4-methylfecosterol. The C-8 sterol isomerase erg2 then catalyzes the reaction which results in unsaturation at C-7 in the B ring of sterols and thus converts fecosterol to episterol. The sterol-C5-desaturase erg3B then catalyzes the introduction of a C-5 double bond in the B ring to produce 5-dehydroepisterol. The 2 other sterol-C5-desaturases, erg3A and erg3C, seem to be less important in ergosterol biosynthesis. The C-22 sterol desaturase erg5 further converts 5-dehydroepisterol into ergosta-5,7,22,24(28)-tetraen-3beta-ol by forming the C-22(23) double bond in the sterol side chain. Finally, ergosta-5,7,22,24(28)-tetraen-3beta-ol is substrate of the C-24(28) sterol reductases erg4A and erg4B to produce ergosterol. Possible alternative sterol biosynthetic pathways might exist from fecosterol to ergosterol, depending on the activities of the erg3 isoforms. The sequence is that of Squalene epoxidase erg1 from Aspergillus fumigatus (strain ATCC MYA-4609 / CBS 101355 / FGSC A1100 / Af293) (Neosartorya fumigata).